Reading from the N-terminus, the 333-residue chain is Gap junction alpha-4 protein (333 aa).

The Cytoplasmic segment spans residues 1 to 20 (MGDWGFLEKLLDQVQEHSTV). The chain crosses the membrane as a helical span at residues 21 to 40 (VGKIWLTVLFIFRILILGLA). The Extracellular segment spans residues 41-76 (GESVWGDEQSDFECNTAQPGCTNVCYDQAFPISHIR). A helical transmembrane segment spans residues 77 to 99 (YWVLQFLFVSTPTLVYLGHVIYL). Residues 100–148 (SRREERLRQKEGELRALPAKDPRVERALASIERQMAKISVAEDGHLRIR) lie on the Cytoplasmic side of the membrane. A helical transmembrane segment spans residues 149–165 (GALMGTYVASVLCKSVL). Residues 166-207 (EAGFLYGQWRLYGWTMEPVFVCQRSPCPYLVDCFVSRPTEKT) are Extracellular-facing. The chain crosses the membrane as a helical span at residues 208 to 230 (IFIIFMLVVGLISLVLNLLELAY). The Cytoplasmic segment spans residues 231-333 (LLCRCLSRGV…SSSASKKQYV (103 aa)). Residues 303–333 (SRAPLFLDPPPQTGRKSPSRPSSSASKKQYV) form a disordered region. The span at 317–333 (RKSPSRPSSSASKKQYV) shows a compositional bias: low complexity.

The protein belongs to the connexin family. Alpha-type (group II) subfamily. As to quaternary structure, a connexon is composed of a hexamer of connexins.

It is found in the cell membrane. The protein localises to the cell junction. Its subcellular location is the gap junction. One gap junction consists of a cluster of closely packed pairs of transmembrane channels, the connexons, through which materials of low MW diffuse from one cell to a neighboring cell. The chain is Gap junction alpha-4 protein (GJA4) from Bos taurus (Bovine).